The following is a 661-amino-acid chain: 7-beta-hydroxy-3-oxochol-24-oyl-CoA 4-desaturase (661 aa).

Glutamine 104 is an FMN binding site. Residue 168–171 (HCAH) coordinates substrate. Catalysis depends on tyrosine 173, which acts as the Proton donor. FMN contacts are provided by residues arginine 222, lysine 298, and 320–321 (GR). [4Fe-4S] cluster contacts are provided by cysteine 344, cysteine 347, cysteine 351, and cysteine 363. FAD contacts are provided by glycine 394, glutamate 413, glutamine 421, lysine 431, and alanine 458.

This sequence in the N-terminal section; belongs to the NADH:flavin oxidoreductase/NADH oxidase family. In terms of assembly, homotrimer. It depends on FMN as a cofactor. FAD is required as a cofactor. The cofactor is [4Fe-4S] cluster.

The enzyme catalyses 7beta-hydroxy-3-oxochol-24-oyl-CoA + NAD(+) = 7beta-hydroxy-3-oxochol-4-en-24-oyl-CoA + NADH + H(+). It participates in lipid metabolism; bile acid degradation. With respect to regulation, activity is inhibited by sulfhydryl-reactive compounds, acriflavine, o-phenanthroline and EDTA. In terms of biological role, NADH-dependent flavin oxidoreductase. Stereo-specific NAD(H)-dependent 3-oxo-delta4-cholenoic acid oxidoreductase involved in bile acid 7beta-dehydroxylation. In Clostridium scindens (strain JCM 10418 / VPI 12708), this protein is 7-beta-hydroxy-3-oxochol-24-oyl-CoA 4-desaturase.